A 430-amino-acid polypeptide reads, in one-letter code: UDP-N-acetylmuramoylalanine--D-glutamate ligase (430 aa).

An ATP-binding site is contributed by 109-115; sequence GTDGKST.

Belongs to the MurCDEF family.

It localises to the cytoplasm. The enzyme catalyses UDP-N-acetyl-alpha-D-muramoyl-L-alanine + D-glutamate + ATP = UDP-N-acetyl-alpha-D-muramoyl-L-alanyl-D-glutamate + ADP + phosphate + H(+). It participates in cell wall biogenesis; peptidoglycan biosynthesis. Cell wall formation. Catalyzes the addition of glutamate to the nucleotide precursor UDP-N-acetylmuramoyl-L-alanine (UMA). This Thermotoga maritima (strain ATCC 43589 / DSM 3109 / JCM 10099 / NBRC 100826 / MSB8) protein is UDP-N-acetylmuramoylalanine--D-glutamate ligase.